The following is a 206-amino-acid chain: Thiamine-phosphate synthase (206 aa).

4-amino-2-methyl-5-(diphosphooxymethyl)pyrimidine contacts are provided by residues 38–42 (QLRAK) and asparagine 70. Mg(2+) is bound by residues aspartate 71 and aspartate 90. Serine 107 is a 4-amino-2-methyl-5-(diphosphooxymethyl)pyrimidine binding site. Residue 133–135 (TTT) participates in 2-[(2R,5Z)-2-carboxy-4-methylthiazol-5(2H)-ylidene]ethyl phosphate binding. Residue lysine 136 participates in 4-amino-2-methyl-5-(diphosphooxymethyl)pyrimidine binding. Residues glycine 164 and 184-185 (VS) each bind 2-[(2R,5Z)-2-carboxy-4-methylthiazol-5(2H)-ylidene]ethyl phosphate.

Belongs to the thiamine-phosphate synthase family. Mg(2+) serves as cofactor.

It catalyses the reaction 2-[(2R,5Z)-2-carboxy-4-methylthiazol-5(2H)-ylidene]ethyl phosphate + 4-amino-2-methyl-5-(diphosphooxymethyl)pyrimidine + 2 H(+) = thiamine phosphate + CO2 + diphosphate. The catalysed reaction is 2-(2-carboxy-4-methylthiazol-5-yl)ethyl phosphate + 4-amino-2-methyl-5-(diphosphooxymethyl)pyrimidine + 2 H(+) = thiamine phosphate + CO2 + diphosphate. The enzyme catalyses 4-methyl-5-(2-phosphooxyethyl)-thiazole + 4-amino-2-methyl-5-(diphosphooxymethyl)pyrimidine + H(+) = thiamine phosphate + diphosphate. It functions in the pathway cofactor biosynthesis; thiamine diphosphate biosynthesis; thiamine phosphate from 4-amino-2-methyl-5-diphosphomethylpyrimidine and 4-methyl-5-(2-phosphoethyl)-thiazole: step 1/1. Functionally, condenses 4-methyl-5-(beta-hydroxyethyl)thiazole monophosphate (THZ-P) and 2-methyl-4-amino-5-hydroxymethyl pyrimidine pyrophosphate (HMP-PP) to form thiamine monophosphate (TMP). The protein is Thiamine-phosphate synthase of Herpetosiphon aurantiacus (strain ATCC 23779 / DSM 785 / 114-95).